The sequence spans 248 residues: Glutaredoxin domain-containing cysteine-rich protein 2 (248 aa).

Basic and acidic residues-rich tracts occupy residues 1-16 (MEDPEKKLNQKSDGKP) and 157-172 (LMNKEESYGGRDQHDR). 2 disordered regions span residues 1-20 (MEDPEKKLNQKSDGKPRKVR) and 150-172 (EEAEEESLMNKEESYGGRDQHDR).

This sequence belongs to the GRXCR2 family. In terms of assembly, interacts with TPRN; the interaction restricts TPRN to the stereocilum basal region.

The protein resides in the cell projection. The protein localises to the stereocilium. Required for hearing. Plays a role in maintaining cochlear stereocilia bundles that are involved in sound detection. Ensures the restriction of TPRN to the basal region of stereocilia in hair cells. The polypeptide is Glutaredoxin domain-containing cysteine-rich protein 2 (GRXCR2) (Homo sapiens (Human)).